The following is a 377-amino-acid chain: MNTPSQAQVRRAIAEAQTIVVKVGSSSLTEPSGHLDPQRLNALVAAIARVRLMGGRVVLVSSGAIAAGFGTLGFDKRPTDVADQQACAAVGQGLLMAQYEAAFARYGLRVGQILITVSDTIAPQQYRNVRRTLDRLLDLGAVPIINENDSLASNEIRFGDNDRLSALIANIVVADALVLLTDVDALYTAPPSEPGSKRISYVPNVEDALAKVQVGGTGSNVGTGGMVTKMEAARVAAVSGIPAVLTCASNAGPAMMGDPVGTAFAPINDRGSSRRLWIGFASHPQGTLVADSGAAKAVRGGAASLLAAGVVEVKGDFAAGDAVWVDDEQGNHLAKGLVGFDSEEIPQMLGRNTAQLKRFLGEEYAHPLVHRDNLVLV.

Lys-22 is a binding site for ATP. Residues Ser-62, Asp-149, and Asn-161 each contribute to the substrate site. Residues Thr-181–Asp-182 and Thr-223–Lys-229 contribute to the ATP site. The PUA domain maps to Gln-285 to Phe-359.

It belongs to the glutamate 5-kinase family.

It localises to the cytoplasm. The catalysed reaction is L-glutamate + ATP = L-glutamyl 5-phosphate + ADP. The protein operates within amino-acid biosynthesis; L-proline biosynthesis; L-glutamate 5-semialdehyde from L-glutamate: step 1/2. Functionally, catalyzes the transfer of a phosphate group to glutamate to form L-glutamate 5-phosphate. This Bifidobacterium adolescentis (strain ATCC 15703 / DSM 20083 / NCTC 11814 / E194a) protein is Glutamate 5-kinase.